The chain runs to 75 residues: Veswaprin-b (75 aa).

The first 24 residues, 1-24, serve as a signal peptide directing secretion; it reads MSSGGLLLLLGLLTLWAELTPISG. Residues 23–42 are disordered; the sequence is SGQDRPKKPGLRPPRPQKPP. Residues 27–72 form the WAP; atypical domain; the sequence is RPKKPGLRPPRPQKPPCVRECKNDWRCPGEQKCCRYGCIYECRDPI. 3 disulfides stabilise this stretch: Cys-43–Cys-64, Cys-47–Cys-59, and Cys-53–Cys-68.

The protein belongs to the venom waprin family. Expressed by the venom gland.

The protein localises to the secreted. Functionally, damages membranes of susceptible bacteria. Has no hemolytic activity. Not toxic to mice. Does not inhibit the proteinases elastase and cathepsin G. This is Veswaprin-b from Demansia vestigiata (Lesser black whip snake).